Consider the following 153-residue polypeptide: 6,7-dimethyl-8-ribityllumazine synthase (153 aa).

Residues Phe-22, 56–58 (AFE), and 80–82 (AVI) contribute to the 5-amino-6-(D-ribitylamino)uracil site. Residue 85–86 (AT) coordinates (2S)-2-hydroxy-3-oxobutyl phosphate. The active-site Proton donor is the His-88. Residue Phe-113 participates in 5-amino-6-(D-ribitylamino)uracil binding. Residue Arg-127 participates in (2S)-2-hydroxy-3-oxobutyl phosphate binding.

This sequence belongs to the DMRL synthase family.

The enzyme catalyses (2S)-2-hydroxy-3-oxobutyl phosphate + 5-amino-6-(D-ribitylamino)uracil = 6,7-dimethyl-8-(1-D-ribityl)lumazine + phosphate + 2 H2O + H(+). Its pathway is cofactor biosynthesis; riboflavin biosynthesis; riboflavin from 2-hydroxy-3-oxobutyl phosphate and 5-amino-6-(D-ribitylamino)uracil: step 1/2. Functionally, catalyzes the formation of 6,7-dimethyl-8-ribityllumazine by condensation of 5-amino-6-(D-ribitylamino)uracil with 3,4-dihydroxy-2-butanone 4-phosphate. This is the penultimate step in the biosynthesis of riboflavin. This Alkaliphilus metalliredigens (strain QYMF) protein is 6,7-dimethyl-8-ribityllumazine synthase.